Consider the following 193-residue polypeptide: AP-3 complex subunit sigma-2 (193 aa).

It belongs to the adaptor complexes small subunit family. Adaptor protein complex 3 (AP-3) is a heterotetramer composed of two large adaptins (delta-type subunit AP3D1 and beta-type subunit AP3B1 or AP3B2), a medium adaptin (mu-type subunit AP3M1 or AP3M2) and a small adaptin (sigma-type subunit APS1 or AP3S2). Interacts with AGAP1. AP-3 associates with the BLOC-1 complex.

It is found in the golgi apparatus. The protein resides in the cytoplasmic vesicle membrane. Part of the AP-3 complex, an adaptor-related complex which is not clathrin-associated. The complex is associated with the Golgi region as well as more peripheral structures. It facilitates the budding of vesicles from the Golgi membrane and may be directly involved in trafficking to lysosomes. In concert with the BLOC-1 complex, AP-3 is required to target cargos into vesicles assembled at cell bodies for delivery into neurites and nerve terminals. This chain is AP-3 complex subunit sigma-2 (AP3S2), found in Bos taurus (Bovine).